The sequence spans 411 residues: Alpha-N-acetylgalactosaminidase (411 aa).

A signal peptide spans 1-17 (MLLKTVLLLGHVAQVLM). 2 disulfide bridges follow: Cys38/Cys80 and Cys42/Cys49. Residue 78–79 (DD) coordinates substrate. A glycan (N-linked (GlcNAc...) asparagine) is linked at Asn124. Cys127 and Cys158 are disulfide-bonded. Residue Lys154 participates in substrate binding. The Nucleophile role is filled by Asp156. N-linked (GlcNAc...) asparagine glycosylation is present at Asn177. Residues Cys187 and Cys209 are joined by a disulfide bond. Ser188 contacts substrate. Residue Asn201 is glycosylated (N-linked (GlcNAc...) asparagine). Residues Arg213 and Asp217 each contribute to the substrate site. Catalysis depends on Asp217, which acts as the Proton donor. Phosphoserine occurs at positions 322 and 332. Asn359 and Asn385 each carry an N-linked (GlcNAc...) asparagine glycan.

This sequence belongs to the glycosyl hydrolase 27 family. Homodimer.

The protein localises to the lysosome. The catalysed reaction is Cleavage of non-reducing alpha-(1-&gt;3)-N-acetylgalactosamine residues from human blood group A and AB mucin glycoproteins, Forssman hapten and blood group A lacto series glycolipids.. It carries out the reaction a neolactoside IV(3)-alpha-GalNAc,IV(2)-alpha-Fuc-nLc4Cer(d18:1(4E)) + H2O = a neolactoside IV(2)-alpha-Fuc-nLc4Cer(d18:1(4E)) + N-acetyl-alpha-D-galactosamine. It catalyses the reaction a neolactoside IV(3)-alpha-GalNAc,IV(2)-alpha-Fuc-nLc4Cer(d18:0) + H2O = a neolactoside IV(2)-alpha-Fuc-nLc4Cer(d18:0) + N-acetyl-alpha-D-galactosamine. The enzyme catalyses a globoside IV3GalNAc-Gb4Cer + H2O = N-acetyl-alpha-D-galactosamine + a globoside Gb4Cer. Its function is as follows. Removes terminal alpha-N-acetylgalactosamine residues from glycolipids and glycopeptides. Required for the breakdown of glycolipids. The polypeptide is Alpha-N-acetylgalactosaminidase (Homo sapiens (Human)).